The sequence spans 164 residues: CDP-archaeol synthase (164 aa).

4 helical membrane-spanning segments follow: residues 3 to 23, 55 to 75, 77 to 97, and 122 to 142; these read LTVF…AVFA, AIGI…YHVI, VFDA…GAFI, and FLVY…AVVI.

This sequence belongs to the CDP-archaeol synthase family. Requires Mg(2+) as cofactor.

It is found in the cell membrane. The enzyme catalyses 2,3-bis-O-(geranylgeranyl)-sn-glycerol 1-phosphate + CTP + H(+) = CDP-2,3-bis-O-(geranylgeranyl)-sn-glycerol + diphosphate. It functions in the pathway membrane lipid metabolism; glycerophospholipid metabolism. Functionally, catalyzes the formation of CDP-2,3-bis-(O-geranylgeranyl)-sn-glycerol (CDP-archaeol) from 2,3-bis-(O-geranylgeranyl)-sn-glycerol 1-phosphate (DGGGP) and CTP. This reaction is the third ether-bond-formation step in the biosynthesis of archaeal membrane lipids. The chain is CDP-archaeol synthase from Pyrobaculum aerophilum (strain ATCC 51768 / DSM 7523 / JCM 9630 / CIP 104966 / NBRC 100827 / IM2).